The chain runs to 117 residues: Anti-sigma F factor antagonist (117 aa).

Residues 3–113 (LGIDMNVKES…QSEQQALLTL (111 aa)) enclose the STAS domain. Phosphoserine is present on Ser58.

This sequence belongs to the anti-sigma-factor antagonist family. Phosphorylated by SpoIIAB on a serine residue.

Its function is as follows. In the phosphorylated form it could act as an anti-anti-sigma factor that counteracts SpoIIAB and thus releases sigma f from inhibition. The polypeptide is Anti-sigma F factor antagonist (spoIIAA) (Bacillus subtilis (strain 168)).